Consider the following 262-residue polypeptide: Sepiapterin reductase (262 aa).

Position 1 is an N-acetylmethionine (M1). NADP(+) is bound at residue G15–G21. S33 carries the post-translational modification Phosphoserine. R43–S44 contributes to the NADP(+) binding site. At S46 the chain carries Phosphoserine; by CaMK2; in vitro. D70–L71 contributes to the NADP(+) binding site. Substrate-binding positions include S158–L159 and Y171. K175 provides a ligand contact to NADP(+). Phosphoserine; by CaMK2; in vitro is present on S196. Residue G200 coordinates substrate. L202–Q207 is an NADP(+) binding site. S214 carries the post-translational modification Phosphoserine; by CaMK2; in vitro. D258 contacts substrate.

The protein belongs to the sepiapterin reductase family. Homodimer. In terms of processing, in vitro phosphorylation of Ser-46, Ser-196 and Ser-214 by CaMK2 does not change kinetic parameters.

It localises to the cytoplasm. It carries out the reaction L-erythro-7,8-dihydrobiopterin + NADP(+) = L-sepiapterin + NADPH + H(+). It catalyses the reaction (6R)-L-erythro-5,6,7,8-tetrahydrobiopterin + 2 NADP(+) = 6-pyruvoyl-5,6,7,8-tetrahydropterin + 2 NADPH + 2 H(+). Catalyzes the final one or two reductions in tetra-hydrobiopterin biosynthesis to form 5,6,7,8-tetrahydrobiopterin. The polypeptide is Sepiapterin reductase (Spr) (Rattus norvegicus (Rat)).